We begin with the raw amino-acid sequence, 431 residues long: Reverse prenyltransferase criA (431 aa).

Residues arginine 104, lysine 193, tyrosine 195, lysine 262, tyrosine 264, tyrosine 347, tyrosine 412, and tyrosine 416 each contribute to the dimethylallyl diphosphate site.

This sequence belongs to the tryptophan dimethylallyltransferase family. Monomer.

It carries out the reaction cyclo(L-tryptophyl-L-alanyl) + dimethylallyl diphosphate = preechinulin + diphosphate. It functions in the pathway secondary metabolite biosynthesis. The protein operates within alkaloid biosynthesis. Reverse prenyltransferase; part of the gene cluster that mediates the biosynthesis of echinulin family alkaloid. The pathway begins with the biosynthesis of the cyclic dipeptide cyclo-L-Trp-L-Ala (cyclo-TA) by the NRPS criC via condensation of L-alanine and L-tryptophan. The prenyltransferase criA then catalyzes the first prenylation step, a reverse prenylation reaction at C2, to yield preechinulin. Preechinulin is the substrate of the cytochrome P450 monooxygenase criE that catalyzes the formation of the double bond between C10 and C11 to produce neoechulin A. The unique prenyltransferase criF functions as a competitive enzyme with criE for preechinulin metabolization and uses preechinulin for effective regiospecific prenylations. Preechinulin is prenylated by criF at C5 or C7. C7-prenylation leads to accumulation of tardioxopiperazine B without further modification by criF. In contrast, the C5-prenylated tardioxopiperazine A can be prenylated again by criF, predominantly at C7 to form echinulin or less frequently at C4 to give variecolorin L. CriF also accepts neoechilunin A to produce varlecolorin G (prenylation at C5) or isoechinulin A (prenylation at C7). CriF further converts isoechinulin A into dehydroechinulin. Moreover, a yet unidentified enzyme can also convert neoechilunin A into neoechilunin B by introducing a double bond between positions C14 and C17 and thus provides a further substrate to criF for C5 and C7 prenylation. This Aspergillus cristatus (Chinese Fuzhuan brick tea-fermentation fungus) protein is Reverse prenyltransferase criA.